A 106-amino-acid polypeptide reads, in one-letter code: ATP-dependent Clp protease adapter protein ClpS (106 aa).

It belongs to the ClpS family. Binds to the N-terminal domain of the chaperone ClpA.

Functionally, involved in the modulation of the specificity of the ClpAP-mediated ATP-dependent protein degradation. The chain is ATP-dependent Clp protease adapter protein ClpS from Yersinia enterocolitica serotype O:8 / biotype 1B (strain NCTC 13174 / 8081).